Consider the following 288-residue polypeptide: Transmembrane and coiled-coil domain-containing protein 5A (288 aa).

Residues 13–105 are a coiled coil; sequence IISLNMDLER…VHSISELQRK (93 aa). Residues 227-249 form a helical membrane-spanning segment; the sequence is SLLFSTLFFIRLLGYLIFHLSFI.

In terms of tissue distribution, testis-specific. Expressed in spermatogenic cells of testis but disappear by the time mature spermatozoa are formed (at protein level).

The protein resides in the endoplasmic reticulum membrane. The protein localises to the nucleus membrane. The sequence is that of Transmembrane and coiled-coil domain-containing protein 5A (Tmco5a) from Rattus norvegicus (Rat).